Consider the following 283-residue polypeptide: Non-selective voltage-gated ion channel VDAC3 (283 aa).

The residue at position 2 (cysteine 2) is an N-acetylcysteine. Threonine 4 carries the post-translational modification Phosphothreonine. 3 positions are modified to N6-acetyllysine: lysine 12, lysine 15, and lysine 20. 2 beta stranded membrane-spanning segments follow: residues 26 to 35 (MVKIDLKTKS) and 39 to 47 (VEFSTSGHA). Glycyl lysine isopeptide (Lys-Gly) (interchain with G-Cter in ubiquitin) cross-links involve residues lysine 53 and lysine 61. A run of 3 beta stranded transmembrane segments spans residues 54 to 64 (ASGNLETKYKV), 69 to 76 (LTFTQKWN), and 80 to 89 (TLGTEISWEN). The residue at position 90 (lysine 90) is an N6-acetyllysine. A beta stranded membrane pass occupies residues 95 to 104 (LKLTLDTIFV). Glycyl lysine isopeptide (Lys-Gly) (interchain with G-Cter in ubiquitin) cross-links involve residues lysine 109 and lysine 110. The next 10 beta stranded transmembrane spans lie at 111–120 (SGKLKASYKR), 123–130 (FSVGSNVD), 137–145 (TIYGWAVLA), 150–158 (LAGYQMSFD), 163–175 (KLSQNNFALGYKA), 178–185 (FQLHTHVN), 189–198 (EFGGSIYQKV), 202–211 (IETSINLAWT), 218–227 (RFGIAAKYML), and 231–238 (TSLSAKVN). A Glycyl lysine isopeptide (Lys-Gly) (interchain with G-Cter in ubiquitin) cross-link involves residue lysine 163. Serine 241 is modified (phosphoserine). Residues 242 to 244 (LIG) and 260 to 264 (SALID) each bind NAD(+). The next 2 membrane-spanning stretches (beta stranded) occupy residues 242 to 251 (LIGLGYTQTL) and 254 to 263 (GVKLTLSALI). Lysine 266 bears the N6-acetyllysine; alternate mark. Lysine 266 is covalently cross-linked (Glycyl lysine isopeptide (Lys-Gly) (interchain with G-Cter in ubiquitin); alternate). The chain crosses the membrane as a beta stranded span at residues 273-282 (HKVGLGFELE). Lysine 274 participates in a covalent cross-link: Glycyl lysine isopeptide (Lys-Gly) (interchain with G-Cter in ubiquitin).

This sequence belongs to the eukaryotic mitochondrial porin family. In terms of assembly, interacts with ARMC12 in a TBC1D21-dependent manner. Interacts with MISFA. Post-translationally, ubiquitinated by PRKN during mitophagy, leading to its degradation and enhancement of mitophagy. Deubiquitinated by USP30. In terms of tissue distribution, expressed in erythrocytes (at protein level). Widely expressed. Highest in testis.

The protein localises to the mitochondrion outer membrane. It localises to the membrane. The catalysed reaction is chloride(in) = chloride(out). It carries out the reaction K(+)(in) = K(+)(out). Its function is as follows. Non-selective voltage-gated ion channel that mediates the transport of anions and cations through the mitochondrion outer membrane and plasma membrane. Forms a high-conducting channel with a stable open state and a voltage-induced closure with a mild preference for anions over cations. Involved in male fertility and sperm mitochondrial sheath formation. The protein is Non-selective voltage-gated ion channel VDAC3 of Homo sapiens (Human).